Consider the following 1692-residue polypeptide: Adenylate cyclase (1692 aa).

Disordered regions lie at residues 1-22 and 103-142; these read MDQSKRLLKSAVPNPPEHFKTG and SLSDTGRTKSDTALAARESSEKSEVPRDTRSAGIKPYKEN. Residues 120–132 show a composition bias toward basic and acidic residues; sequence ESSEKSEVPRDTR. Positions 174 to 195 are required for interaction with gpa2; the sequence is FTNLTFPEPISDDSDSVEFQRD. Residues 292–380 form the Ras-associating domain; it reads KEFFLRVYRD…SDEEINEEDN (89 aa). LRR repeat units lie at residues 430-450, 454-474, 477-498, 503-524, 526-547, 549-570, 572-594, 596-617, 618-639, 660-681, 684-705, 707-729, 730-751, 753-774, 783-805, 807-827, 831-852, 855-876, 878-899, 901-922, and 930-951; these read ELISLNVSHNLSLDLPLDFME, KLKRLDISNNLRSPRGKPITA, QLEVLNMSRNDIYELDPLIFSG, SLKELNIANNKLFFLPHSTRYL, NLTYLDLSYNNFVTFPLIITEL, QLETLNFSHNLLSQISSKIGSL, KLKHLYLQFNDLSNRLPQEIGLL, NLETIDLSYNAITNIASLSECP, KLNSINVACNLLSFYEYSNPSA, NLVYFDISHAKLIGLKDSVIET, NVETVKVNYNHFTSISDAISAM, NLKYLSCTNCEMSYVSPNLGKLK, HLVHLDLHANNIKIFPEEVWQV, SLKVVNLSSNILEKIKLPVATS, QLKIMRTLSGNPVSSLSSQEFVM, TVEELYLVDNRLGNDCFTALE, CLKVLNLSYNYLTEIPSKFFQN, DLKHLFVSGNELANLSISSTAQ, LLETLYANGNRLSSFPKNEALS, SLRFLDISTNNLQNLAVEKAEK, and QLEYLNLSGNTWFRFSEHEDTN. Residues 995–1275 enclose the PPM-type phosphatase domain; sequence RYGVCGYLSR…KNVLVVIVEL (281 aa). The region spanning 1332–1469 is the Guanylate cyclase domain; the sequence is AMVFTDIKNS…PVVNRTSRVV (138 aa). The Mg(2+) site is built by aspartate 1337 and aspartate 1380. The Mn(2+) site is built by aspartate 1337 and aspartate 1380. The segment covering 1585–1597 has biased composition (basic and acidic residues); it reads SDSKSVHGEEGGS. The tract at residues 1585-1614 is disordered; the sequence is SDSKSVHGEEGGSGKRSVSSLRNVSPSEST. Residues 1600–1614 are compositionally biased toward polar residues; the sequence is RSVSSLRNVSPSEST.

Belongs to the adenylyl cyclase class-3 family. Interacts (via N-terminus) with gpa2; the interaction is direct and serves to activate adenylate cyclase and cAMP-PKA signaling, to repress sexual development and gluconeogenesis. Interacts with git1. Mn(2+) serves as cofactor.

The protein resides in the cytoplasm. The catalysed reaction is ATP = 3',5'-cyclic AMP + diphosphate. With respect to regulation, activated by binding G protein gpa2. Activated by git1. In contrast to yeast cyclase, S.pombe cyclase is not likely to be regulated by RAS proteins. Acts in glucose-induced cAMP signaling by catalyzing the synthesis of the second messenger, cAMP to activate PKA signaling and repress sexual development and gluconeogenesis. The polypeptide is Adenylate cyclase (Schizosaccharomyces pombe (strain 972 / ATCC 24843) (Fission yeast)).